The sequence spans 219 residues: tRNA (guanine-N(7)-)-methyltransferase (219 aa).

Residues glutamate 44, aspartate 69, glutamate 102, and asparagine 125 each contribute to the S-adenosyl-L-methionine site. Lysine 129 and aspartate 161 together coordinate substrate.

This sequence belongs to the class I-like SAM-binding methyltransferase superfamily. TrmB family.

It carries out the reaction guanosine(46) in tRNA + S-adenosyl-L-methionine = N(7)-methylguanosine(46) in tRNA + S-adenosyl-L-homocysteine. The protein operates within tRNA modification; N(7)-methylguanine-tRNA biosynthesis. In terms of biological role, catalyzes the formation of N(7)-methylguanine at position 46 (m7G46) in tRNA. In Clostridium perfringens (strain 13 / Type A), this protein is tRNA (guanine-N(7)-)-methyltransferase.